Here is an 87-residue protein sequence, read N- to C-terminus: Small ribosomal subunit protein bS20 (87 aa).

Residues Met1 to Lys22 form a disordered region.

It belongs to the bacterial ribosomal protein bS20 family.

Binds directly to 16S ribosomal RNA. In Clavibacter michiganensis subsp. michiganensis (strain NCPPB 382), this protein is Small ribosomal subunit protein bS20.